The primary structure comprises 561 residues: uncharacterized protein (561 aa).

Transmembrane regions (helical) follow at residues 27-49 (ILEF…GLLI), 54-71 (FFGI…ALAL), 83-105 (LVYQ…SEFF), 115-137 (LTLF…IKLF), 142-162 (IIGA…AAMV), and 177-199 (VVGY…AIGA). Residues 292–373 (QQDVPIEDTD…MSEVRRFLGD (82 aa)) enclose the RCK C-terminal domain. A run of 4 helical transmembrane segments spans residues 383 to 405 (LMPF…PLPG), 409 to 428 (LSLG…GALN), 441 to 463 (ASRT…SAGV), and 478 to 500 (IAGG…MPLF).

This sequence belongs to the AAE transporter (TC 2.A.81) family.

It localises to the cell membrane. This is an uncharacterized protein from Corynebacterium diphtheriae (strain ATCC 700971 / NCTC 13129 / Biotype gravis).